A 275-amino-acid chain; its full sequence is Rhamnulose-1-phosphate aldolase (275 aa).

Glutamate 117 is a catalytic residue. Zn(2+) contacts are provided by histidine 141, histidine 143, and histidine 212.

The protein belongs to the aldolase class II family. RhaD subfamily. As to quaternary structure, homotetramer. Zn(2+) is required as a cofactor.

It is found in the cytoplasm. The enzyme catalyses L-rhamnulose 1-phosphate = (S)-lactaldehyde + dihydroxyacetone phosphate. It functions in the pathway carbohydrate degradation; L-rhamnose degradation; glycerone phosphate from L-rhamnose: step 3/3. Catalyzes the reversible cleavage of L-rhamnulose-1-phosphate to dihydroxyacetone phosphate (DHAP) and L-lactaldehyde. The chain is Rhamnulose-1-phosphate aldolase from Salmonella dublin (strain CT_02021853).